A 454-amino-acid polypeptide reads, in one-letter code: Cobyrinate a,c-diamide synthase (454 aa).

The GATase cobBQ-type domain occupies 247-442 (KIGIAMDSAF…IHAHWASNPN (196 aa)). Cys329 acts as the Nucleophile in catalysis.

The protein belongs to the CobB/CbiA family. Requires Mg(2+) as cofactor.

It catalyses the reaction cob(II)yrinate + 2 L-glutamine + 2 ATP + 2 H2O = cob(II)yrinate a,c diamide + 2 L-glutamate + 2 ADP + 2 phosphate + 2 H(+). It participates in cofactor biosynthesis; adenosylcobalamin biosynthesis; cob(II)yrinate a,c-diamide from sirohydrochlorin (anaerobic route): step 10/10. Its function is as follows. Catalyzes the ATP-dependent amidation of the two carboxylate groups at positions a and c of cobyrinate, using either L-glutamine or ammonia as the nitrogen source. The chain is Cobyrinate a,c-diamide synthase from Leptospira interrogans serogroup Icterohaemorrhagiae serovar copenhageni (strain Fiocruz L1-130).